A 339-amino-acid chain; its full sequence is Malate/(S)-sulfolactate dehydrogenase (339 aa).

This sequence belongs to the LDH2/MDH2 oxidoreductase family. In terms of assembly, homodimer.

The protein resides in the cytoplasm. It carries out the reaction (S)-malate + NAD(+) = oxaloacetate + NADH + H(+). The catalysed reaction is (S)-malate + NADP(+) = oxaloacetate + NADPH + H(+). It catalyses the reaction (2S)-3-sulfolactate + NAD(+) = 3-sulfopyruvate + NADH + H(+). In terms of biological role, acts on oxaloacetate, sulfopyruvate but not on pyruvate. Has a higher selectivity for the coenzyme NADH than for NADPH. The polypeptide is Malate/(S)-sulfolactate dehydrogenase (mdh) (Methanothermus fervidus (strain ATCC 43054 / DSM 2088 / JCM 10308 / V24 S)).